Reading from the N-terminus, the 352-residue chain is Putative hetero-Diels-Alderase (352 aa).

A signal peptide spans 1–20 (MRYHLSALVLVFTAFRETLT). N-linked (GlcNAc...) asparagine glycosylation is found at N26, N41, N47, N135, N211, and N310.

Belongs to the eupF Diels-Alderase family.

The protein operates within secondary metabolite biosynthesis; terpenoid biosynthesis. In terms of biological role, putative hetero-Diels-Alderase; part of the gene cluster that mediates the biosynthesis of eupenifeldin, a bistropolone meroterpenoid that acts as an antitumor agent. The first step of eupenifeldin biosynthesis is the biosynthesis of 3-methylorcinaldehyde performed by the non-reducing polyketide synthase eupA. Oxidative dearomatization of 3-methylorcinaldehyde likely catalyzed by the FAD-dependent monooxygenase eupB is followed by oxidative ring expansion by the 2-oxoglutarate-dependent dioxygenase eupC to provide the first tropolone metabolite, tropolone stipitaldehyde. In parallel, generation of sesquiterpene alpha-humulene from farnesylpyrophosphate (FPP) is catalyzed by the terpene cyclase eupE. The cytochrome P450 monooxygenase eupD then hydroxylates humulene to humulenol. The putative Diels-Alderase eupF probably catalyzes the formation of the tropolone-humulene skeleton by linking humulenol and the polyketide moiety. The short-chain dehydrogenase/reductase eupG and the flavin-dependent monooxygenase eupH are also essential for eupenifeldin biosynthesis and are likely the additional decorating enzymes of the tropolone-humulene skeleton to produce final eupenifeldin or derivatives. This chain is Putative hetero-Diels-Alderase, found in Phoma sp.